Consider the following 285-residue polypeptide: Nucleotide-binding protein PSPTO_4456 (285 aa).

ATP is bound at residue 8–15 (GRSGSGKS). GTP is bound at residue 60-63 (DARN).

This sequence belongs to the RapZ-like family.

In terms of biological role, displays ATPase and GTPase activities. The chain is Nucleotide-binding protein PSPTO_4456 from Pseudomonas syringae pv. tomato (strain ATCC BAA-871 / DC3000).